The following is a 192-amino-acid chain: Erythropoietin (192 aa).

The N-terminal stretch at 1 to 26 (MGSCECPALLLLLSLLLLPLGLPVLG) is a signal peptide. Disulfide bonds link Cys33–Cys187 and Cys55–Cys59. N-linked (GlcNAc...) asparagine glycosylation is present at Asn50. Residues Asn64 and Asn109 are each glycosylated (N-linked (GlcNAc...) asparagine).

The protein belongs to the EPO/TPO family. Produced by kidney or liver of adult mammals and by liver of fetal or neonatal mammals.

It localises to the secreted. Functionally, hormone involved in the regulation of erythrocyte proliferation and differentiation and the maintenance of a physiological level of circulating erythrocyte mass. Binds to EPOR leading to EPOR dimerization and JAK2 activation thereby activating specific downstream effectors, including STAT1 and STAT3. The polypeptide is Erythropoietin (EPO) (Felis catus (Cat)).